Here is a 299-residue protein sequence, read N- to C-terminus: Probable lipid kinase YegS (299 aa).

Residues Ala2–Thr133 form the DAGKc domain. ATP-binding positions include Thr40, Gly66 to Glu72, and Thr95. Mg(2+)-binding residues include Leu215, Asp218, and Leu220. Residue Glu271 is the Proton acceptor of the active site.

It belongs to the diacylglycerol/lipid kinase family. YegS lipid kinase subfamily. It depends on Mg(2+) as a cofactor. Ca(2+) is required as a cofactor.

It localises to the cytoplasm. Probably phosphorylates lipids; the in vivo substrate is unknown. This is Probable lipid kinase YegS from Salmonella choleraesuis (strain SC-B67).